The primary structure comprises 176 residues: ATP-dependent protease subunit HslV (176 aa).

Residue T5 is part of the active site. Residues G161, C164, and T167 each contribute to the Na(+) site.

This sequence belongs to the peptidase T1B family. HslV subfamily. A double ring-shaped homohexamer of HslV is capped on each side by a ring-shaped HslU homohexamer. The assembly of the HslU/HslV complex is dependent on binding of ATP.

It localises to the cytoplasm. It carries out the reaction ATP-dependent cleavage of peptide bonds with broad specificity.. With respect to regulation, allosterically activated by HslU binding. In terms of biological role, protease subunit of a proteasome-like degradation complex believed to be a general protein degrading machinery. The sequence is that of ATP-dependent protease subunit HslV from Sulfurovum sp. (strain NBC37-1).